Reading from the N-terminus, the 881-residue chain is Alanine--tRNA ligase (881 aa).

Zn(2+) contacts are provided by H568, H572, C670, and H674.

This sequence belongs to the class-II aminoacyl-tRNA synthetase family. Requires Zn(2+) as cofactor.

It is found in the cytoplasm. The catalysed reaction is tRNA(Ala) + L-alanine + ATP = L-alanyl-tRNA(Ala) + AMP + diphosphate. Catalyzes the attachment of alanine to tRNA(Ala) in a two-step reaction: alanine is first activated by ATP to form Ala-AMP and then transferred to the acceptor end of tRNA(Ala). Also edits incorrectly charged Ser-tRNA(Ala) and Gly-tRNA(Ala) via its editing domain. This Clostridium acetobutylicum (strain ATCC 824 / DSM 792 / JCM 1419 / IAM 19013 / LMG 5710 / NBRC 13948 / NRRL B-527 / VKM B-1787 / 2291 / W) protein is Alanine--tRNA ligase.